The chain runs to 443 residues: Probable glycine dehydrogenase (decarboxylating) subunit 1 (443 aa).

The protein belongs to the GcvP family. N-terminal subunit subfamily. In terms of assembly, the glycine cleavage system is composed of four proteins: P, T, L and H. In this organism, the P 'protein' is a heterodimer of two subunits.

It catalyses the reaction N(6)-[(R)-lipoyl]-L-lysyl-[glycine-cleavage complex H protein] + glycine + H(+) = N(6)-[(R)-S(8)-aminomethyldihydrolipoyl]-L-lysyl-[glycine-cleavage complex H protein] + CO2. In terms of biological role, the glycine cleavage system catalyzes the degradation of glycine. The P protein binds the alpha-amino group of glycine through its pyridoxal phosphate cofactor; CO(2) is released and the remaining methylamine moiety is then transferred to the lipoamide cofactor of the H protein. The polypeptide is Probable glycine dehydrogenase (decarboxylating) subunit 1 (Chloroherpeton thalassium (strain ATCC 35110 / GB-78)).